A 412-amino-acid chain; its full sequence is Candidapepsin-2 (412 aa).

Positions 1–25 (MTTIAIFTKNVLLAIAFALFAQGAA) form a signal peptide, or 18, or 21. A propeptide spans 26 to 61 (IPDPAKRDDNPGFVALDFEVTRKPLDVNATSELSKR) (activation peptide). A glycan (N-linked (GlcNAc...) asparagine) is linked at N53. A Peptidase A1 domain is found at 75–383 (YGIRVSVGSN…LDKETVLSRS (309 aa)). D93 is a catalytic residue. A disulfide bridge connects residues C108 and C113. Residue D273 is part of the active site. C311 and C345 are oxidised to a cystine.

This sequence belongs to the peptidase A1 family. O-glycosylated.

It is found in the secreted. The catalysed reaction is Preferential cleavage at the carboxyl of hydrophobic amino acids, but fails to cleave 15-Leu-|-Tyr-16, 16-Tyr-|-Leu-17 and 24-Phe-|-Phe-25 of insulin B chain. Activates trypsinogen, and degrades keratin.. The protein is Candidapepsin-2 (SAPP2) of Candida parapsilosis (Yeast).